The primary structure comprises 834 residues: MPSHSRSRDRYGGRDSDREARYDYDYARRRYATDDNDDDYDDDELEHGLNERRYRRDGYLPPRESRTRGYYERDAEGAADEELLGDERNPGPRASRSYGHDYDARRGERSRAREAPRRSERHRDRDREGQSRRRAYEDDGRHRTRDGRRERGRESDAEARRSRRREAGRETAARKHQSSDSTNSASHLLSADALARLGAQYEKEERRKRENAKDAAKAERKRQKKRAVVGEESRALRDPPGESHRDRTKARVASGAYLEEGRSPEMQVRHRGGGGPAMEARWRKEGSWGGTMDDAGGGRPFWKRKKWIGLGALILILVIVIPVAVVVSKKHDNKSDPADPQGTSPGKSNLDGLSHDSIPAYAQGTYLDPWTWYDTTDFNVTFTNETVGGLSIMGLNSTWDDSARPNDNVPPLNEPFPYGSQPIRGVNLGGWLSIEPFIVPSLFDSYSSVAGIIDEWTLSKRLGSSAARTLEKHYATFITEQDFADIRDAGLDHVRIQYSYWAVATYDDDPYVAKISWRYLLRAIEYCRKYGLRVKLDPHGIPGSQNGWNHSGREGVIGWLNGTDGELNRNRSLAVHDSVSKFFAQDRYKNIVTIYGLVNEPLMLSLSVEDVLDWTTEATKLVQKNGITAYVALHDGFLNLSKWKSMLKNRPDKMLLDTHQYTIFNTGQIGLNHTAKVNLICNDWYNMIKEINSTSTGWGPTICGEWSQADTDCAKYLNNVGRGTRWEGTFSLTDSTQYCPTADTGPPCSCANANADVSEYSADYKKFLQTYAEAQMSAFETGQGWFYWTWRTESAAQWSYRTAWKNGFMPAKAYAPSFKCGDAVPDFGNLPEYY.

The segment covering 1 to 33 has biased composition (basic and acidic residues); sequence MPSHSRSRDRYGGRDSDREARYDYDYARRRYAT. Disordered stretches follow at residues 1 to 188 and 200 to 251; these read MPSH…ASHL and QYEK…TKAR. Topologically, residues 1–306 are cytoplasmic; sequence MPSHSRSRDR…GGRPFWKRKK (306 aa). Over residues 34 to 45 the composition is skewed to acidic residues; it reads DDNDDDYDDDEL. Basic and acidic residues-rich tracts occupy residues 46–76, 98–173, 201–218, and 228–245; these read EHGL…RDAE, YGHD…ETAA, YEKE…AAKA, and VVGE…ESHR. A helical; Signal-anchor for type II membrane protein membrane pass occupies residues 307–327; it reads WIGLGALILILVIVIPVAVVV. The Extracellular segment spans residues 328–834; it reads SKKHDNKSDP…PDFGNLPEYY (507 aa). The tract at residues 331 to 354 is disordered; sequence HDNKSDPADPQGTSPGKSNLDGLS. N-linked (GlcNAc...) asparagine glycosylation is found at Asn333, Asn379, Asn384, Asn396, Asn549, Asn561, and Asn570. Glu600 functions as the Proton donor in the catalytic mechanism. N-linked (GlcNAc...) asparagine glycosylation is found at Asn639, Asn672, and Asn692. Catalysis depends on Glu705, which acts as the Nucleophile.

It belongs to the glycosyl hydrolase 5 (cellulase A) family.

Its subcellular location is the cell membrane. It catalyses the reaction Successive hydrolysis of beta-D-glucose units from the non-reducing ends of (1-&gt;3)-beta-D-glucans, releasing alpha-glucose.. In terms of biological role, glucosidase involved in the degradation of cellulosic biomass. Active on lichenan. This is Probable glucan 1,3-beta-glucosidase D (exgD) from Neosartorya fischeri (strain ATCC 1020 / DSM 3700 / CBS 544.65 / FGSC A1164 / JCM 1740 / NRRL 181 / WB 181) (Aspergillus fischerianus).